Here is a 600-residue protein sequence, read N- to C-terminus: Spore coat protein SP96 (600 aa).

In terms of domain architecture, DSCP-N spans 21–140 (QSCSSYSGDN…DVCQCKGGQT (120 aa)). Residues 139-178 (QTSGGSTTGSQTSGGSTSGGSTTGSQTSGGSTTGSQTSGS) form a disordered region. Residues 161 to 178 (TGSQTSGGSTTGSQTSGS) are compositionally biased toward low complexity. 6 Follistatin-like domains span residues 184 to 206 (SCSNTQCPNGFYCQVQGNNAVCV), 220 to 243 (PCDTVQCPYGYSCESRDGFEAKCT), 267 to 289 (LCDNVHCPRGYKCNAKNGVAKCI), 297 to 319 (VCRNIQCPTGYRCEDHNRNPICV), 331 to 359 (TCNDVNCEASGLVCVMTRARCKVGAAKCC), and 394 to 416 (PCSVAQCPTGYVCVAQNNVAVCL). Residues 420–530 (TTTTGSTSDS…ASSSSASSSS (111 aa)) form a disordered region.

Post-translationally, glycosylated; may contain fucose and GlcNAc-alpha-1-P-Ser.

It localises to the spore wall. This Dictyostelium discoideum (Social amoeba) protein is Spore coat protein SP96 (cotA).